The chain runs to 90 residues: RNA-binding protein Hfq (90 aa).

Residues 10–70 (DGFLNLLRRE…LSTITPARPL (61 aa)) enclose the Sm domain.

The protein belongs to the Hfq family. In terms of assembly, homohexamer.

In terms of biological role, RNA chaperone that binds small regulatory RNA (sRNAs) and mRNAs to facilitate mRNA translational regulation in response to envelope stress, environmental stress and changes in metabolite concentrations. Also binds with high specificity to tRNAs. This Symbiobacterium thermophilum (strain DSM 24528 / JCM 14929 / IAM 14863 / T) protein is RNA-binding protein Hfq.